We begin with the raw amino-acid sequence, 546 residues long: Phosphomethylpyrimidine synthase (546 aa).

Substrate-binding positions include N145, M174, Y203, H239, 259–261, 300–303, and E339; these read SRG and DGLR. H343 is a binding site for Zn(2+). Residue Y366 participates in substrate binding. A Zn(2+)-binding site is contributed by H407. Positions 487, 490, and 495 each coordinate [4Fe-4S] cluster.

This sequence belongs to the ThiC family. [4Fe-4S] cluster is required as a cofactor.

It carries out the reaction 5-amino-1-(5-phospho-beta-D-ribosyl)imidazole + S-adenosyl-L-methionine = 4-amino-2-methyl-5-(phosphooxymethyl)pyrimidine + CO + 5'-deoxyadenosine + formate + L-methionine + 3 H(+). The protein operates within cofactor biosynthesis; thiamine diphosphate biosynthesis. Catalyzes the synthesis of the hydroxymethylpyrimidine phosphate (HMP-P) moiety of thiamine from aminoimidazole ribotide (AIR) in a radical S-adenosyl-L-methionine (SAM)-dependent reaction. The chain is Phosphomethylpyrimidine synthase from Mycobacterium ulcerans (strain Agy99).